Reading from the N-terminus, the 536-residue chain is Membrane protein insertase YidC (536 aa).

A run of 4 helical transmembrane segments spans residues Leu-5–Thr-25, Gly-353–Leu-373, Val-418–Tyr-438, and Met-495–Ile-515.

The protein belongs to the OXA1/ALB3/YidC family. Type 1 subfamily. Interacts with the Sec translocase complex via SecD. Specifically interacts with transmembrane segments of nascent integral membrane proteins during membrane integration.

The protein localises to the cell inner membrane. Its function is as follows. Required for the insertion and/or proper folding and/or complex formation of integral membrane proteins into the membrane. Involved in integration of membrane proteins that insert both dependently and independently of the Sec translocase complex, as well as at least some lipoproteins. Aids folding of multispanning membrane proteins. The chain is Membrane protein insertase YidC from Geobacter sp. (strain M21).